A 62-amino-acid polypeptide reads, in one-letter code: MGKVHGSLARAGKVRGQTPKVAKQDKKKKPRGRAHKRLQHNRRFVTAVVGFGKKRGPNSSEK.

A disordered region spans residues 1–38; it reads MGKVHGSLARAGKVRGQTPKVAKQDKKKKPRGRAHKRL. A compositionally biased stretch (basic residues) spans 25 to 38; sequence DKKKKPRGRAHKRL.

It belongs to the eukaryotic ribosomal protein eS30 family.

This Arabidopsis thaliana (Mouse-ear cress) protein is Small ribosomal subunit protein eS30z/eS30y/eS30x (RPS30A).